Reading from the N-terminus, the 547-residue chain is Glucose-6-phosphate isomerase 1 (547 aa).

Glu-353 acts as the Proton donor in catalysis. Active-site residues include His-384 and Lys-512.

Belongs to the GPI family.

The protein resides in the cytoplasm. The enzyme catalyses alpha-D-glucose 6-phosphate = beta-D-fructose 6-phosphate. It participates in carbohydrate biosynthesis; gluconeogenesis. It functions in the pathway carbohydrate degradation; glycolysis; D-glyceraldehyde 3-phosphate and glycerone phosphate from D-glucose: step 2/4. Its function is as follows. Catalyzes the reversible isomerization of glucose-6-phosphate to fructose-6-phosphate. This is Glucose-6-phosphate isomerase 1 from Chromobacterium violaceum (strain ATCC 12472 / DSM 30191 / JCM 1249 / CCUG 213 / NBRC 12614 / NCIMB 9131 / NCTC 9757 / MK).